The following is an 876-amino-acid chain: Alanine--tRNA ligase (876 aa).

Histidine 565, histidine 569, cysteine 667, and histidine 671 together coordinate Zn(2+).

This sequence belongs to the class-II aminoacyl-tRNA synthetase family. It depends on Zn(2+) as a cofactor.

The protein localises to the cytoplasm. It carries out the reaction tRNA(Ala) + L-alanine + ATP = L-alanyl-tRNA(Ala) + AMP + diphosphate. Its function is as follows. Catalyzes the attachment of alanine to tRNA(Ala) in a two-step reaction: alanine is first activated by ATP to form Ala-AMP and then transferred to the acceptor end of tRNA(Ala). Also edits incorrectly charged Ser-tRNA(Ala) and Gly-tRNA(Ala) via its editing domain. This is Alanine--tRNA ligase from Staphylococcus saprophyticus subsp. saprophyticus (strain ATCC 15305 / DSM 20229 / NCIMB 8711 / NCTC 7292 / S-41).